We begin with the raw amino-acid sequence, 430 residues long: UDP-N-acetylmuramoylalanine--D-glutamate ligase (430 aa).

Residue 109–115 (GTDGKST) participates in ATP binding.

This sequence belongs to the MurCDEF family.

Its subcellular location is the cytoplasm. The catalysed reaction is UDP-N-acetyl-alpha-D-muramoyl-L-alanine + D-glutamate + ATP = UDP-N-acetyl-alpha-D-muramoyl-L-alanyl-D-glutamate + ADP + phosphate + H(+). Its pathway is cell wall biogenesis; peptidoglycan biosynthesis. In terms of biological role, cell wall formation. Catalyzes the addition of glutamate to the nucleotide precursor UDP-N-acetylmuramoyl-L-alanine (UMA). The chain is UDP-N-acetylmuramoylalanine--D-glutamate ligase from Thermotoga petrophila (strain ATCC BAA-488 / DSM 13995 / JCM 10881 / RKU-1).